The sequence spans 386 residues: Trichocyst matrix protein T2-A (386 aa).

Positions 1–19 are cleaved as a signal peptide; the sequence is MKTVILALALIVLASSTQA. The propeptide occupies 20-48; the sequence is DVIATIKKIDQSPFGRTLFDTIYLELQTG. A coiled-coil region spans residues 51–154; that stretch reads LDRLLSTLTD…AEEHEDFEEK (104 aa). The propeptide occupies 184 to 238; it reads KGKATKQTHKFTKEVASMIQKHFTTSAKKTAKFQHRKGYSKLFKAFATIASKVEQ. Positions 293–332 form a coiled coil; that stretch reads SALANATSDLASLNDIIAQVEASLDTTEQRIENVSADRHD.

It belongs to the TMP family.

Its subcellular location is the trichocyst. Its function is as follows. Structural protein that crystallize inside the trichocyst matrix. This is Trichocyst matrix protein T2-A (T2A) from Paramecium tetraurelia.